A 194-amino-acid polypeptide reads, in one-letter code: ATP-dependent Clp protease proteolytic subunit (194 aa).

Residue serine 97 is the Nucleophile of the active site. Histidine 122 is a catalytic residue.

The protein belongs to the peptidase S14 family. Fourteen ClpP subunits assemble into 2 heptameric rings which stack back to back to give a disk-like structure with a central cavity, resembling the structure of eukaryotic proteasomes.

It is found in the cytoplasm. The enzyme catalyses Hydrolysis of proteins to small peptides in the presence of ATP and magnesium. alpha-casein is the usual test substrate. In the absence of ATP, only oligopeptides shorter than five residues are hydrolyzed (such as succinyl-Leu-Tyr-|-NHMec, and Leu-Tyr-Leu-|-Tyr-Trp, in which cleavage of the -Tyr-|-Leu- and -Tyr-|-Trp bonds also occurs).. Cleaves peptides in various proteins in a process that requires ATP hydrolysis. Has a chymotrypsin-like activity. Plays a major role in the degradation of misfolded proteins. The polypeptide is ATP-dependent Clp protease proteolytic subunit (Lactobacillus helveticus (strain DPC 4571)).